Consider the following 152-residue polypeptide: UPF0260 protein BAB1_1496 (152 aa).

Belongs to the UPF0260 family.

This chain is UPF0260 protein BAB1_1496, found in Brucella abortus (strain 2308).